A 335-amino-acid chain; its full sequence is DNA-directed RNA polymerase subunit alpha (335 aa).

The alpha N-terminal domain (alpha-NTD) stretch occupies residues 1–231 (MVREKVTVST…DLFIPFLHME (231 aa)). The interval 262-335 (KKKLSLESIF…FALDLPKNLN (74 aa)) is alpha C-terminal domain (alpha-CTD).

It belongs to the RNA polymerase alpha chain family. In terms of assembly, in plastids the minimal PEP RNA polymerase catalytic core is composed of four subunits: alpha, beta, beta', and beta''. When a (nuclear-encoded) sigma factor is associated with the core the holoenzyme is formed, which can initiate transcription.

It is found in the plastid. It catalyses the reaction RNA(n) + a ribonucleoside 5'-triphosphate = RNA(n+1) + diphosphate. Functionally, DNA-dependent RNA polymerase catalyzes the transcription of DNA into RNA using the four ribonucleoside triphosphates as substrates. This Cuscuta reflexa (Southern Asian dodder) protein is DNA-directed RNA polymerase subunit alpha.